Consider the following 440-residue polypeptide: 23S rRNA (uracil(1939)-C(5))-methyltransferase RlmD (440 aa).

A TRAM domain is found at 8–69; it reads PQKINKLQRE…RQFGLATTKK (62 aa). 4 residues coordinate [4Fe-4S] cluster: Cys-82, Cys-88, Cys-91, and Cys-169. S-adenosyl-L-methionine contacts are provided by Gln-272, Phe-301, Asn-306, Glu-322, Asp-349, and Asp-370. Cys-396 (nucleophile) is an active-site residue.

It belongs to the class I-like SAM-binding methyltransferase superfamily. RNA M5U methyltransferase family. RlmD subfamily.

It carries out the reaction uridine(1939) in 23S rRNA + S-adenosyl-L-methionine = 5-methyluridine(1939) in 23S rRNA + S-adenosyl-L-homocysteine + H(+). Its function is as follows. Catalyzes the formation of 5-methyl-uridine at position 1939 (m5U1939) in 23S rRNA. The protein is 23S rRNA (uracil(1939)-C(5))-methyltransferase RlmD of Mannheimia succiniciproducens (strain KCTC 0769BP / MBEL55E).